The chain runs to 206 residues: Crossover junction endodeoxyribonuclease RuvC (206 aa).

Residues Asp7, Glu67, and Asp138 contribute to the active site. The Mg(2+) site is built by Asp7, Glu67, and Asp138.

Belongs to the RuvC family. Homodimer which binds Holliday junction (HJ) DNA. The HJ becomes 2-fold symmetrical on binding to RuvC with unstacked arms; it has a different conformation from HJ DNA in complex with RuvA. In the full resolvosome a probable DNA-RuvA(4)-RuvB(12)-RuvC(2) complex forms which resolves the HJ. Mg(2+) is required as a cofactor.

The protein resides in the cytoplasm. The enzyme catalyses Endonucleolytic cleavage at a junction such as a reciprocal single-stranded crossover between two homologous DNA duplexes (Holliday junction).. The RuvA-RuvB-RuvC complex processes Holliday junction (HJ) DNA during genetic recombination and DNA repair. Endonuclease that resolves HJ intermediates. Cleaves cruciform DNA by making single-stranded nicks across the HJ at symmetrical positions within the homologous arms, yielding a 5'-phosphate and a 3'-hydroxyl group; requires a central core of homology in the junction. The consensus cleavage sequence is 5'-(A/T)TT(C/G)-3'. Cleavage occurs on the 3'-side of the TT dinucleotide at the point of strand exchange. HJ branch migration catalyzed by RuvA-RuvB allows RuvC to scan DNA until it finds its consensus sequence, where it cleaves and resolves the cruciform DNA. This chain is Crossover junction endodeoxyribonuclease RuvC, found in Anaeromyxobacter sp. (strain Fw109-5).